The following is an 800-amino-acid chain: Elongation factor G, mitochondrial (800 aa).

The transit peptide at 1–34 (MSVHTVMRTQVRSLAGMPKAAMRPLGNSFCARRY) directs the protein to the mitochondrion. The tr-type G domain maps to 99–385 (SKVRNIGIAA…GICDYLPNPA (287 aa)). GTP is bound by residues 108 to 115 (AHIDSGKT), 183 to 187 (DTPGH), and 237 to 240 (NKMD).

The protein belongs to the TRAFAC class translation factor GTPase superfamily. Classic translation factor GTPase family. EF-G/EF-2 subfamily.

Its subcellular location is the mitochondrion. Its pathway is protein biosynthesis; polypeptide chain elongation. In terms of biological role, mitochondrial GTPase that catalyzes the GTP-dependent ribosomal translocation step during translation elongation. During this step, the ribosome changes from the pre-translocational (PRE) to the post-translocational (POST) state as the newly formed A-site-bound peptidyl-tRNA and P-site-bound deacylated tRNA move to the P and E sites, respectively. Catalyzes the coordinated movement of the two tRNA molecules, the mRNA and conformational changes in the ribosome. In Coccidioides immitis (strain RS) (Valley fever fungus), this protein is Elongation factor G, mitochondrial.